The primary structure comprises 119 residues: Large ribosomal subunit protein uL22c (119 aa).

This sequence belongs to the universal ribosomal protein uL22 family. Part of the 50S ribosomal subunit.

The protein localises to the plastid. The protein resides in the chloroplast. Functionally, this protein binds specifically to 23S rRNA. The globular domain of the protein is located near the polypeptide exit tunnel on the outside of the subunit, while an extended beta-hairpin is found that lines the wall of the exit tunnel in the center of the 70S ribosome. The sequence is that of Large ribosomal subunit protein uL22c (rpl22) from Anthoceros angustus (Hornwort).